A 297-amino-acid chain; its full sequence is HTH-type transcriptional regulator ArgP (297 aa).

The region spanning 4-60 is the HTH lysR-type domain; it reads PDYRTLQALDAVIRERGFERAAQKLCITQSAVSQRIKQLENLFGQPLLVRTIPPRPT. Positions 21-40 form a DNA-binding region, H-T-H motif; it reads FERAAQKLCITQSAVSQRIK.

Belongs to the LysR transcriptional regulatory family. As to quaternary structure, homodimer.

Functionally, controls the transcription of genes involved in arginine and lysine metabolism. This chain is HTH-type transcriptional regulator ArgP, found in Pectobacterium carotovorum subsp. carotovorum (strain PC1).